Reading from the N-terminus, the 641-residue chain is Probable licABCH operon regulator (641 aa).

2 consecutive PRD domains span residues 184–289 (ILPK…TQSQ) and 296–403 (SIEE…KKTE). A phosphohistidine; by HPr mark is found at His219, His278, His333, and His392. The PTS EIIB type-2 domain maps to 407–498 (KRCIIVCASG…ILSDEKEKAN (92 aa)). Phosphocysteine; by EIIA is present on Cys413. Positions 499–638 (RYLKKELVFF…QELSDVFDQK (140 aa)) constitute a PTS EIIA type-2 domain. His559 carries the phosphohistidine; by EIIB modification.

This sequence belongs to the transcriptional antiterminator BglG family.

The regulatory activity of LicR is modulated by phosphorylation and dephosphorylation of the various LicR domains. It becomes activated via phosphoryl group transfer from PEP, EI and HPr on the two conserved histidine residues in the PRD 2 domain, whereas phosphorylation of the EIIA-like domain on His-559 by the PTS EIIB component LicB inactivates LicR. In terms of biological role, positive regulator of the licABCH operon. This chain is Probable licABCH operon regulator (licR), found in Bacillus subtilis (strain 168).